The chain runs to 440 residues: Serine/threonine-protein kinase STK11 (440 aa).

Residues 49–309 form the Protein kinase domain; it reads YLMGDLLGEG…IQQIRQHNWF (261 aa). ATP contacts are provided by residues 55 to 63 and lysine 78; that span reads LGEGSYGKV. Aspartate 176 (proton acceptor) is an active-site residue. Phosphothreonine; by autocatalysis occurs at positions 336 and 365. Residues 370-440 form a disordered region; the sequence is VPGQVPEEEA…IRKLSTCKQQ (71 aa). Over residues 430 to 440 the composition is skewed to basic residues; it reads KIRKLSTCKQQ. Serine 435 is modified (phosphoserine; by PKA).

The protein belongs to the protein kinase superfamily. CAMK Ser/Thr protein kinase family. LKB1 subfamily. As to quaternary structure, catalytic component of a trimeric complex composed of STK11/LKB1, STRAD (STRADA or STRADB) and CAB39/MO25 (CAB39/MO25alpha or CAB39L/MO25beta). Requires Mg(2+) as cofactor. Mn(2+) serves as cofactor. Ubiquitously expressed in all tissues tested. High levels were observed in duodenum and skeletal muscle, lower levels in liver and pancreas.

It localises to the nucleus. Its subcellular location is the cytoplasm. The enzyme catalyses L-seryl-[protein] + ATP = O-phospho-L-seryl-[protein] + ADP + H(+). It catalyses the reaction L-threonyl-[protein] + ATP = O-phospho-L-threonyl-[protein] + ADP + H(+). Functionally, tumor suppressor serine/threonine-protein kinase that controls the activity of AMP-activated protein kinase (AMPK) family members, thereby playing a role in various processes such as cell metabolism, cell polarity, apoptosis and DNA damage response. Acts by phosphorylating the T-loop of AMPK family proteins, leading to promote their activity. The chain is Serine/threonine-protein kinase STK11 from Gallus gallus (Chicken).